A 499-amino-acid polypeptide reads, in one-letter code: MSQEEHNHEELNDQLQVRRDKMNQLRDNGIDPFGARFERTHQSQEVISAYQDLTKEELEEKAIEVTIAGRMMTKRGKGKAGFAHLQDLEGQIQIYVRKDSVGDDQYEIFKSSDLGDLIGVTGKVFKTNVGELSVKATSFELLTKALRPLPDKYHGLKDVEQRYRQRYLDLIVNPDSKHTFITRSKIIQAMRRYLDDHGYLEVETPTMHSIPGGASARPFITHHNALDIPLYMRIAIELHLKRLIVGGLEKVYEIGRVFRNEGVSTRHNPEFTMIELYEAYADYKDIMSLTENLVAHIAQEVLGTTTIQYGEEQIDLKPEWKRIHMVDAVKEATGVDFWEEVTVEQAREYAKEHEVEIKDSMTVGHIINEFFEQKIEETLIQPTFIYGHPVEISPLAKKNPEDPRFTDRFELFIVGREHANAFTELNDPIDQRERFEAQLKEREAGNDEAHLMDEDFVEALEYGMPPTGGLGIGIDRLVMLLTNAPSIRDVLLFPQMRQR.

Positions 410 and 417 each coordinate Mg(2+).

The protein belongs to the class-II aminoacyl-tRNA synthetase family. Homodimer. The cofactor is Mg(2+).

Its subcellular location is the cytoplasm. It catalyses the reaction tRNA(Lys) + L-lysine + ATP = L-lysyl-tRNA(Lys) + AMP + diphosphate. This chain is Lysine--tRNA ligase (lysS), found in Bacillus subtilis (strain 168).